A 242-amino-acid polypeptide reads, in one-letter code: Neuromodulin (242 aa).

The segment at 1-242 (MLCCMRRTKQ…EEREADQEHA (242 aa)) is disordered. Residues Cys3 and Cys4 are each lipidated (S-palmitoyl cysteine). A compositionally biased stretch (basic and acidic residues) spans 9–32 (KQVEKNDEDQKIEQDGIKPEDKAH). Residues 31–60 (AHKAATKIQASFRGHITRKKLKGEKKGDAP) form the IQ domain. The residue at position 41 (Ser41) is a Phosphoserine; by PHK and PKC. Positions 66–84 (ANEKDEAAVAEGTEKKEGE) are enriched in basic and acidic residues. Over residues 85 to 97 (GSTPAEAAPGAGP) the composition is skewed to low complexity. Ser86 is subject to Phosphoserine. Positions 98–118 (KPEEKTGKAGETPSEEKKGEG) are enriched in basic and acidic residues. The segment covering 119-134 (APDAATEQAAPQAPAP) has biased composition (low complexity). The segment covering 143 to 158 (ETESATKASTDNSPSS) has biased composition (polar residues). Phosphoserine occurs at positions 155, 157, and 158. The span at 159 to 171 (KAEDAPAKEEPKQ) shows a compositional bias: basic and acidic residues. Low complexity predominate over residues 172–204 (ADVPAAVTAAAATAPAAEDAAAMATAQPPTETA). Ser206 and Ser207 each carry phosphoserine; by CK2. The segment covering 209 to 242 (AEEKIEAVDETKPKDSARQDEGKGEEREADQEHA) has biased composition (basic and acidic residues).

This sequence belongs to the neuromodulin family. As to quaternary structure, identified in a complex containing FGFR4, NCAM1, CDH2, PLCG1, FRS2, SRC, SHC1, GAP43 and CTTN. Interacts (via IQ domain) with calmodulin. Binds calmodulin with a greater affinity in the absence of Ca(2+) than in its presence. Phosphorylated. Phosphorylation of this protein by a protein kinase C is specifically correlated with certain forms of synaptic plasticity. In terms of processing, palmitoylated by ZDHHC3. Palmitoylation is regulated by ARF6 and is essential for plasma membrane association and axonal and dendritic filopodia induction. Deacylated by LYPLA2.

The protein localises to the cell membrane. It is found in the cell projection. Its subcellular location is the growth cone membrane. The protein resides in the synapse. It localises to the filopodium membrane. The protein localises to the perikaryon. It is found in the dendrite. Its subcellular location is the axon. The protein resides in the cytoplasm. This protein is associated with nerve growth. It is a major component of the motile 'growth cones' that form the tips of elongating axons. Plays a role in axonal and dendritic filopodia induction. The polypeptide is Neuromodulin (GAP43) (Bos taurus (Bovine)).